The chain runs to 343 residues: Apolipoprotein L6 (343 aa).

Basic and acidic residues predominate over residues methionine 1–glutamate 10. The interval methionine 1–leucine 24 is disordered.

Belongs to the apolipoprotein L family. In terms of tissue distribution, widely expressed; highly expressed in the uterus, fetal brain and spinal cord, also detected in heart, liver, lung, colon, spleen, thymus, prostate, placenta, adrenal gland, salivary and mammary gland.

It is found in the cytoplasm. May affect the movement of lipids in the cytoplasm or allow the binding of lipids to organelles. This is Apolipoprotein L6 (APOL6) from Homo sapiens (Human).